The sequence spans 165 residues: Large ribosomal subunit protein uL10 (165 aa).

This sequence belongs to the universal ribosomal protein uL10 family. As to quaternary structure, part of the ribosomal stalk of the 50S ribosomal subunit. The N-terminus interacts with L11 and the large rRNA to form the base of the stalk. The C-terminus forms an elongated spine to which L12 dimers bind in a sequential fashion forming a multimeric L10(L12)X complex.

Its function is as follows. Forms part of the ribosomal stalk, playing a central role in the interaction of the ribosome with GTP-bound translation factors. The protein is Large ribosomal subunit protein uL10 of Burkholderia mallei (strain NCTC 10229).